A 391-amino-acid polypeptide reads, in one-letter code: Thioredoxin-interacting protein (391 aa).

Residue Lys-212 forms a Glycyl lysine isopeptide (Lys-Gly) (interchain with G-Cter in ubiquitin) linkage. A Phosphoserine modification is found at Ser-361.

It belongs to the arrestin family. Homodimer; disulfide-linked. Interacts with TXN/thioredoxin through its redox-active site. Interacts with transcriptional repressors ZBTB16, ZBTB32 and HDAC1. Interacts with DDIT4. Post-translationally, ubiquitinated; undergoes heterotypic 'Lys-48'-/'Lys-63'-branched polyubiquitination catalyzed by ITCH and UBR5 resulting in proteasomal degradation. Deubiquitinated by USP5, leading to TXNIP stabilization.

The protein resides in the cytoplasm. It is found in the nucleus. Its function is as follows. May act as an oxidative stress mediator by inhibiting thioredoxin activity or by limiting its bioavailability. Interacts with COPS5 and restores COPS5-induced suppression of CDKN1B stability, blocking the COPS5-mediated translocation of CDKN1B from the nucleus to the cytoplasm. Functions as a transcriptional repressor, possibly by acting as a bridge molecule between transcription factors and corepressor complexes, and over-expression will induce G0/G1 cell cycle arrest. Required for the maturation of natural killer cells. Acts as a suppressor of tumor cell growth. Inhibits the proteasomal degradation of DDIT4, and thereby contributes to the inhibition of the mammalian target of rapamycin complex 1 (mTORC1). In Homo sapiens (Human), this protein is Thioredoxin-interacting protein (TXNIP).